The following is a 281-amino-acid chain: Pantothenate synthetase (281 aa).

30–37 contributes to the ATP binding site; that stretch reads MGYLHEGH. His37 functions as the Proton donor in the catalytic mechanism. Gln61 serves as a coordination point for (R)-pantoate. Position 61 (Gln61) interacts with beta-alanine. 147 to 150 provides a ligand contact to ATP; it reads GEKD. Gln153 is a (R)-pantoate binding site. ATP is bound by residues Ile176 and 184 to 187; that span reads KSSR.

It belongs to the pantothenate synthetase family. As to quaternary structure, homodimer.

It is found in the cytoplasm. The enzyme catalyses (R)-pantoate + beta-alanine + ATP = (R)-pantothenate + AMP + diphosphate + H(+). The protein operates within cofactor biosynthesis; (R)-pantothenate biosynthesis; (R)-pantothenate from (R)-pantoate and beta-alanine: step 1/1. Catalyzes the condensation of pantoate with beta-alanine in an ATP-dependent reaction via a pantoyl-adenylate intermediate. This Clostridium botulinum (strain Kyoto / Type A2) protein is Pantothenate synthetase.